A 548-amino-acid chain; its full sequence is Glucose-6-phosphate isomerase 1 (548 aa).

Glutamate 353 acts as the Proton donor in catalysis. Residues histidine 384 and lysine 495 contribute to the active site.

The protein belongs to the GPI family.

Its subcellular location is the cytoplasm. The catalysed reaction is alpha-D-glucose 6-phosphate = beta-D-fructose 6-phosphate. Its pathway is carbohydrate biosynthesis; gluconeogenesis. It functions in the pathway carbohydrate degradation; glycolysis; D-glyceraldehyde 3-phosphate and glycerone phosphate from D-glucose: step 2/4. Catalyzes the reversible isomerization of glucose-6-phosphate to fructose-6-phosphate. In Chromohalobacter salexigens (strain ATCC BAA-138 / DSM 3043 / CIP 106854 / NCIMB 13768 / 1H11), this protein is Glucose-6-phosphate isomerase 1.